The following is a 337-amino-acid chain: tRNA dimethylallyltransferase (337 aa).

24-31 (GPTGAGKT) serves as a coordination point for ATP. Residue 26–31 (TGAGKT) coordinates substrate. 2 interaction with substrate tRNA regions span residues 49–52 (DSRQ) and 188–192 (QRAVR).

This sequence belongs to the IPP transferase family. Monomer. Mg(2+) serves as cofactor.

It catalyses the reaction adenosine(37) in tRNA + dimethylallyl diphosphate = N(6)-dimethylallyladenosine(37) in tRNA + diphosphate. Catalyzes the transfer of a dimethylallyl group onto the adenine at position 37 in tRNAs that read codons beginning with uridine, leading to the formation of N6-(dimethylallyl)adenosine (i(6)A). The sequence is that of tRNA dimethylallyltransferase from Nitratidesulfovibrio vulgaris (strain DSM 19637 / Miyazaki F) (Desulfovibrio vulgaris).